A 244-amino-acid polypeptide reads, in one-letter code: Protein-L-isoaspartate O-methyltransferase 2 (244 aa).

Serine 88 is an active-site residue.

This sequence belongs to the methyltransferase superfamily. L-isoaspartyl/D-aspartyl protein methyltransferase family.

Its subcellular location is the cytoplasm. It carries out the reaction [protein]-L-isoaspartate + S-adenosyl-L-methionine = [protein]-L-isoaspartate alpha-methyl ester + S-adenosyl-L-homocysteine. Its function is as follows. Catalyzes the methyl esterification of L-isoaspartyl residues in peptides and proteins that result from spontaneous decomposition of normal L-aspartyl and L-asparaginyl residues. It plays a role in the repair and/or degradation of damaged proteins. The polypeptide is Protein-L-isoaspartate O-methyltransferase 2 (Shewanella sediminis (strain HAW-EB3)).